The primary structure comprises 91 residues: Protein xpaR7 (91 aa).

This is Protein xpaR7 (xpaR7) from Bacillus licheniformis.